The primary structure comprises 382 residues: S-adenosylmethionine synthase (382 aa).

ATP is bound at residue histidine 15. Residue aspartate 17 coordinates Mg(2+). Glutamate 43 contacts K(+). L-methionine contacts are provided by glutamate 56 and glutamine 99. The flexible loop stretch occupies residues 99–109; the sequence is QSPDINQGVDR. ATP is bound by residues 164 to 166, 230 to 231, aspartate 239, 245 to 246, alanine 262, and lysine 266; these read DAK, RF, and RK. Aspartate 239 contacts L-methionine. Lysine 270 contributes to the L-methionine binding site.

The protein belongs to the AdoMet synthase family. In terms of assembly, homotetramer; dimer of dimers. Mg(2+) is required as a cofactor. It depends on K(+) as a cofactor.

It localises to the cytoplasm. It catalyses the reaction L-methionine + ATP + H2O = S-adenosyl-L-methionine + phosphate + diphosphate. It functions in the pathway amino-acid biosynthesis; S-adenosyl-L-methionine biosynthesis; S-adenosyl-L-methionine from L-methionine: step 1/1. Functionally, catalyzes the formation of S-adenosylmethionine (AdoMet) from methionine and ATP. The overall synthetic reaction is composed of two sequential steps, AdoMet formation and the subsequent tripolyphosphate hydrolysis which occurs prior to release of AdoMet from the enzyme. This is S-adenosylmethionine synthase from Glaesserella parasuis serovar 5 (strain SH0165) (Haemophilus parasuis).